Consider the following 42-residue polypeptide: Large ribosomal subunit protein bL36 (42 aa).

It belongs to the bacterial ribosomal protein bL36 family.

The polypeptide is Large ribosomal subunit protein bL36 (Ehrlichia canis (strain Jake)).